The primary structure comprises 211 residues: ATP phosphoribosyltransferase (211 aa).

The protein belongs to the ATP phosphoribosyltransferase family. Short subfamily. Heteromultimer composed of HisG and HisZ subunits.

The protein resides in the cytoplasm. It carries out the reaction 1-(5-phospho-beta-D-ribosyl)-ATP + diphosphate = 5-phospho-alpha-D-ribose 1-diphosphate + ATP. Its pathway is amino-acid biosynthesis; L-histidine biosynthesis; L-histidine from 5-phospho-alpha-D-ribose 1-diphosphate: step 1/9. Catalyzes the condensation of ATP and 5-phosphoribose 1-diphosphate to form N'-(5'-phosphoribosyl)-ATP (PR-ATP). Has a crucial role in the pathway because the rate of histidine biosynthesis seems to be controlled primarily by regulation of HisG enzymatic activity. The protein is ATP phosphoribosyltransferase of Pseudomonas paraeruginosa (strain DSM 24068 / PA7) (Pseudomonas aeruginosa (strain PA7)).